A 97-amino-acid polypeptide reads, in one-letter code: Cell division topological specificity factor (97 aa).

It belongs to the MinE family.

Its function is as follows. Prevents the cell division inhibition by proteins MinC and MinD at internal division sites while permitting inhibition at polar sites. This ensures cell division at the proper site by restricting the formation of a division septum at the midpoint of the long axis of the cell. The sequence is that of Cell division topological specificity factor from Rhodospirillum centenum (strain ATCC 51521 / SW).